Reading from the N-terminus, the 176-residue chain is Protein FAM89A (176 aa).

The interval 140–165 is disordered; the sequence is DFQEQGSLRDGQGRGSPGDPSLPLTH.

The protein belongs to the FAM89 family.

The protein is Protein FAM89A (Fam89a) of Rattus norvegicus (Rat).